The sequence spans 20 residues: 2-oxo-acid reductase (20 aa).

This sequence belongs to the AOR/FOR family. As to quaternary structure, forms various types of homooligomers. The cofactor is [4Fe-4S] cluster. It depends on Mo-molybdopterin as a cofactor.

It is found in the cell membrane. The enzyme catalyses a (2R)-2-hydroxycarboxylate + A = a 2-oxocarboxylate + AH2. Its activity is regulated as follows. Is inhibited by cyanide. Is sensitive to oxygen. In terms of biological role, oxidoreductase with an extremely broad substrate specificity that can reduce reversibly 2-oxocarboxylates to (2R)-hydroxycarboxylates. This Proteus hauseri protein is 2-oxo-acid reductase.